Consider the following 445-residue polypeptide: Tubulin beta-1 chain (445 aa).

The short motif at 1–4 (MREI) is the MREI motif element. 8 residues coordinate GTP: Gln-11, Glu-69, Ser-138, Gly-142, Thr-143, Gly-144, Asn-204, and Asn-226. Residue Glu-69 coordinates Mg(2+). The interval 424 to 445 (QYQDATADEQGEFEEEGEEDEA) is disordered. Residues 429-445 (TADEQGEFEEEGEEDEA) are compositionally biased toward acidic residues. Glu-438 carries the 5-glutamyl polyglutamate modification.

The protein belongs to the tubulin family. In terms of assembly, dimer of alpha and beta chains. A typical microtubule is a hollow water-filled tube with an outer diameter of 25 nm and an inner diameter of 15 nM. Alpha-beta heterodimers associate head-to-tail to form protofilaments running lengthwise along the microtubule wall with the beta-tubulin subunit facing the microtubule plus end conferring a structural polarity. Microtubules usually have 13 protofilaments but different protofilament numbers can be found in some organisms and specialized cells. Mg(2+) serves as cofactor. In terms of processing, some glutamate residues at the C-terminus are polyglycylated, resulting in polyglycine chains on the gamma-carboxyl group. Glycylation is mainly limited to tubulin incorporated into axonemes (cilia and flagella) whereas glutamylation is prevalent in neuronal cells, centrioles, axonemes, and the mitotic spindle. Both modifications can coexist on the same protein on adjacent residues, and lowering polyglycylation levels increases polyglutamylation, and reciprocally. The precise function of polyglycylation is still unclear. Some glutamate residues at the C-terminus are polyglutamylated, resulting in polyglutamate chains on the gamma-carboxyl group. Polyglutamylation plays a key role in microtubule severing by spastin (SPAST). SPAST preferentially recognizes and acts on microtubules decorated with short polyglutamate tails: severing activity by SPAST increases as the number of glutamates per tubulin rises from one to eight, but decreases beyond this glutamylation threshold. As to expression, highly expressed in skeletal muscle.

The protein resides in the cytoplasm. It localises to the cytoskeleton. Functionally, tubulin is the major constituent of microtubules, a cylinder consisting of laterally associated linear protofilaments composed of alpha- and beta-tubulin heterodimers. Microtubules grow by the addition of GTP-tubulin dimers to the microtubule end, where a stabilizing cap forms. Below the cap, tubulin dimers are in GDP-bound state, owing to GTPase activity of alpha-tubulin. In Gallus gallus (Chicken), this protein is Tubulin beta-1 chain.